Reading from the N-terminus, the 172-residue chain is Large ribosomal subunit protein uL10 (172 aa).

Belongs to the universal ribosomal protein uL10 family. In terms of assembly, part of the ribosomal stalk of the 50S ribosomal subunit. The N-terminus interacts with L11 and the large rRNA to form the base of the stalk. The C-terminus forms an elongated spine to which L12 dimers bind in a sequential fashion forming a multimeric L10(L12)X complex.

Its function is as follows. Forms part of the ribosomal stalk, playing a central role in the interaction of the ribosome with GTP-bound translation factors. The sequence is that of Large ribosomal subunit protein uL10 (rplJ) from Brucella abortus biovar 1 (strain 9-941).